The chain runs to 532 residues: 5-methylcytosine-modifying enzyme 1 (532 aa).

Residue 335 to 337 (SLT) coordinates L-ascorbate. Residues histidine 345, aspartate 347, and histidine 397 each contribute to the Fe cation site. 397–399 (HGT) is an L-ascorbate binding site.

The protein belongs to the TET family. Fe(2+) serves as cofactor.

The protein resides in the nucleus. It carries out the reaction a 5-methyl-2'-deoxycytidine in DNA + L-ascorbate + O2 = a (8S,9S)-5-glyceryl-2'-deoxycytidine in DNA + glyoxylate + CO2. It catalyses the reaction a 5-methyl-2'-deoxycytidine in DNA + L-ascorbate + O2 = a (8S,9R)-5-glyceryl-2'-deoxycytidine in DNA + glyoxylate + CO2. Its function is as follows. Dioxygenase that catalyzes DNA modification by mediating the conversion of the modified genomic base 5-methylcytosine (5mC) into 5-glyceryl-methylcytosine (5gmC). Catalyzes the conjugation of a glyceryl moiety from L-ascorbate (vitamin C) to the methyl group of 5mC through a carbon-carbon bond. 5gmC DNA modification may be required during photosynthesis as an epigenetic mark that couteracts DNA methylation. The sequence is that of 5-methylcytosine-modifying enzyme 1 from Chlamydomonas reinhardtii (Chlamydomonas smithii).